Consider the following 372-residue polypeptide: Septin-1 (372 aa).

A Septin-type G domain is found at K27 to S301. The tract at residues G37–S44 is G1 motif. GTP contacts are provided by residues G37–S44, T71, G97, and K176–E184. Residues D94–G97 are G3 motif. A G4 motif region spans residues G175–D178. S211 carries the post-translational modification Phosphoserine. G234 and R250 together coordinate GTP. A Phosphoserine; by AURKB modification is found at S253. T256 is modified (phosphothreonine). Phosphoserine; by AURKB occurs at positions 312 and 320. Residues L352 to L372 form a disordered region. Residues M355–L372 show a composition bias toward low complexity.

Belongs to the TRAFAC class TrmE-Era-EngA-EngB-Septin-like GTPase superfamily. Septin GTPase family. As to quaternary structure, septins polymerize into heterooligomeric protein complexes that form filaments, and can associate with cellular membranes, actin filaments and microtubules. GTPase activity is required for filament formation. Interacts with AURKB. As to expression, expressed at high levels in lymphoid and hematopoietic tissues.

Its subcellular location is the cytoplasm. The protein resides in the cytoskeleton. It is found in the microtubule organizing center. The protein localises to the centrosome. It localises to the midbody. In terms of biological role, filament-forming cytoskeletal GTPase. May play a role in cytokinesis (Potential). The protein is Septin-1 of Homo sapiens (Human).